A 260-amino-acid polypeptide reads, in one-letter code: Indole-3-glycerol phosphate synthase (260 aa).

It belongs to the TrpC family.

The catalysed reaction is 1-(2-carboxyphenylamino)-1-deoxy-D-ribulose 5-phosphate + H(+) = (1S,2R)-1-C-(indol-3-yl)glycerol 3-phosphate + CO2 + H2O. The protein operates within amino-acid biosynthesis; L-tryptophan biosynthesis; L-tryptophan from chorismate: step 4/5. This Koribacter versatilis (strain Ellin345) protein is Indole-3-glycerol phosphate synthase.